Reading from the N-terminus, the 313-residue chain is Probable cell division protein WhiA (313 aa).

The H-T-H motif DNA-binding region spans 277–311 (SLKEVAAQVPDGPISKSGVNHRFQKIREIAKQLKE).

Belongs to the WhiA family.

Involved in cell division and chromosome segregation. The chain is Probable cell division protein WhiA from Lactobacillus johnsonii (strain CNCM I-12250 / La1 / NCC 533).